A 385-amino-acid polypeptide reads, in one-letter code: Leucine aminopeptidase 1 (385 aa).

The signal sequence occupies residues 1–19; sequence MKFPSFLSLGIAASTTALA. A propeptide spanning residues 20-87 is cleaved from the precursor; it reads ALPDQKPIGD…FPRAFAKTAV (68 aa). Asn-177 carries N-linked (GlcNAc...) asparagine glycosylation. Residues His-185 and Asp-204 each coordinate Zn(2+). Asn-229 carries N-linked (GlcNAc...) asparagine glycosylation. Zn(2+)-binding residues include Glu-243 and Asp-270. A disulfide bond links Cys-319 and Cys-323. His-352 provides a ligand contact to Zn(2+).

Belongs to the peptidase M28 family. M28E subfamily. Monomer. Requires Zn(2+) as cofactor.

The protein resides in the secreted. Functionally, extracellular aminopeptidase that allows assimilation of proteinaceous substrates. The protein is Leucine aminopeptidase 1 (LAP1) of Ajellomyces dermatitidis (strain ER-3 / ATCC MYA-2586) (Blastomyces dermatitidis).